We begin with the raw amino-acid sequence, 85 residues long: MAHKKGVGSSKNGRESESKRLGVKVYGGEMAKAGNILVRQRGTVHHPGENVGIGKDHTLYALKSGVVVFTRKKNDRSYVSIKTES.

The interval 1–21 is disordered; sequence MAHKKGVGSSKNGRESESKRL.

This sequence belongs to the bacterial ribosomal protein bL27 family.

This Porphyromonas gingivalis (strain ATCC 33277 / DSM 20709 / CIP 103683 / JCM 12257 / NCTC 11834 / 2561) protein is Large ribosomal subunit protein bL27.